The following is a 259-amino-acid chain: Ribosomal RNA small subunit methyltransferase A (259 aa).

S-adenosyl-L-methionine-binding residues include asparagine 13, leucine 15, glycine 40, glutamate 61, aspartate 85, and asparagine 103.

It belongs to the class I-like SAM-binding methyltransferase superfamily. rRNA adenine N(6)-methyltransferase family. RsmA subfamily.

Its subcellular location is the cytoplasm. The enzyme catalyses adenosine(1518)/adenosine(1519) in 16S rRNA + 4 S-adenosyl-L-methionine = N(6)-dimethyladenosine(1518)/N(6)-dimethyladenosine(1519) in 16S rRNA + 4 S-adenosyl-L-homocysteine + 4 H(+). Functionally, specifically dimethylates two adjacent adenosines (A1518 and A1519) in the loop of a conserved hairpin near the 3'-end of 16S rRNA in the 30S particle. May play a critical role in biogenesis of 30S subunits. In Neisseria meningitidis serogroup A / serotype 4A (strain DSM 15465 / Z2491), this protein is Ribosomal RNA small subunit methyltransferase A.